The sequence spans 802 residues: Oligophrenin-1 (802 aa).

The PH domain occupies 265 to 368 (QPTIEGYLYT…WMEAMDGKEP (104 aa)). Positions 380–564 (MELNEVGFKF…ILIEHFGKIY (185 aa)) constitute a Rho-GAP domain. Disordered stretches follow at residues 569 to 589 (EESA…HKPI), 607 to 770 (LDES…NAGE), and 783 to 802 (FETA…GDES). A compositionally biased stretch (polar residues) spans 616–627 (HQTPNGTITSSI). Residues 716–732 (HHKEGDADSFSKVRPPG) show a composition bias toward basic and acidic residues.

In terms of assembly, interacts with HOMER1. Interacts with AMPA receptor complexes. Interacts with SH3GL2 (endophilin-A1). Interacts (via C-terminus) with NR1D1.

It is found in the postsynapse. Its subcellular location is the presynapse. The protein resides in the cell projection. The protein localises to the axon. It localises to the dendritic spine. It is found in the dendrite. Its subcellular location is the cytoplasm. In terms of biological role, stimulates GTP hydrolysis of members of the Rho family. Its action on RHOA activity and signaling is implicated in growth and stabilization of dendritic spines, and therefore in synaptic function. Critical for the stabilization of AMPA receptors at postsynaptic sites. Critical for the regulation of synaptic vesicle endocytosis at pre-synaptic terminals. Required for the localization of NR1D1 to dendrites, can suppress its repressor activity and protect it from proteasomal degradation. In Pan troglodytes (Chimpanzee), this protein is Oligophrenin-1 (OPHN1).